A 438-amino-acid chain; its full sequence is Adenylosuccinate synthetase (438 aa).

GTP-binding positions include 13-19 (GDEGKGK) and 41-43 (GHT). Catalysis depends on Asp-14, which acts as the Proton acceptor. The Mg(2+) site is built by Asp-14 and Gly-41. IMP is bound by residues 14–17 (DEGK), 39–42 (NAGH), Thr-130, Arg-144, Gln-225, Thr-240, and Arg-312. The active-site Proton donor is His-42. 308-314 (ATTGRQR) contributes to the substrate binding site. Residues Arg-314, 340–342 (KLD), and 422–424 (STG) each bind GTP.

It belongs to the adenylosuccinate synthetase family. Homodimer. The cofactor is Mg(2+).

It is found in the cytoplasm. It carries out the reaction IMP + L-aspartate + GTP = N(6)-(1,2-dicarboxyethyl)-AMP + GDP + phosphate + 2 H(+). The protein operates within purine metabolism; AMP biosynthesis via de novo pathway; AMP from IMP: step 1/2. In terms of biological role, plays an important role in the de novo pathway of purine nucleotide biosynthesis. Catalyzes the first committed step in the biosynthesis of AMP from IMP. In Vesicomyosocius okutanii subsp. Calyptogena okutanii (strain HA), this protein is Adenylosuccinate synthetase.